We begin with the raw amino-acid sequence, 538 residues long: Putative cysteine ligase BshC (538 aa).

It belongs to the BshC family.

In terms of biological role, involved in bacillithiol (BSH) biosynthesis. May catalyze the last step of the pathway, the addition of cysteine to glucosamine malate (GlcN-Mal) to generate BSH. The protein is Putative cysteine ligase BshC of Halalkalibacterium halodurans (strain ATCC BAA-125 / DSM 18197 / FERM 7344 / JCM 9153 / C-125) (Bacillus halodurans).